The primary structure comprises 405 residues: SPbeta prophage-derived uncharacterized protein YomR (405 aa).

A coiled-coil region spans residues 9–36 (QLKQNNIQINSLRGSNDRAEKHMLEHEQ).

The chain is SPbeta prophage-derived uncharacterized protein YomR (yomR) from Bacillus subtilis (strain 168).